A 212-amino-acid chain; its full sequence is Dephospho-CoA kinase (212 aa).

One can recognise a DPCK domain in the interval 8 to 212 (LVGVTGGLGS…QLLQQAMLRR (205 aa)). 16–21 (GSGKSM) contacts ATP.

Belongs to the CoaE family.

It localises to the cytoplasm. The catalysed reaction is 3'-dephospho-CoA + ATP = ADP + CoA + H(+). It participates in cofactor biosynthesis; coenzyme A biosynthesis; CoA from (R)-pantothenate: step 5/5. Catalyzes the phosphorylation of the 3'-hydroxyl group of dephosphocoenzyme A to form coenzyme A. The protein is Dephospho-CoA kinase of Chlorobium chlorochromatii (strain CaD3).